A 756-amino-acid polypeptide reads, in one-letter code: Polyribonucleotide nucleotidyltransferase (756 aa).

D492 and D498 together coordinate Mg(2+). In terms of domain architecture, KH spans 559 to 618 (PQHAEVFVNPDVIRIIIGPGGKNIKAITAATGASIDIEDSGKVSIFAPTYEAMEMAREMV). Residues 628–702 (GKNYVGKVRK…SRKAVLLEEQ (75 aa)) form the S1 motif domain. Residues 703 to 756 (GVEWNPEDTARPSGPPRDRGDRGDRGGRGDRGGDRRGGDRGGRGGDRGRGGDRR) form a disordered region. The span at 718 to 756 (PRDRGDRGDRGGRGDRGGDRRGGDRGGRGGDRGRGGDRR) shows a compositional bias: basic and acidic residues.

This sequence belongs to the polyribonucleotide nucleotidyltransferase family. Mg(2+) serves as cofactor.

The protein resides in the cytoplasm. The catalysed reaction is RNA(n+1) + phosphate = RNA(n) + a ribonucleoside 5'-diphosphate. Involved in mRNA degradation. Catalyzes the phosphorolysis of single-stranded polyribonucleotides processively in the 3'- to 5'-direction. In Nitratidesulfovibrio vulgaris (strain DSM 19637 / Miyazaki F) (Desulfovibrio vulgaris), this protein is Polyribonucleotide nucleotidyltransferase.